The sequence spans 255 residues: 5'-nucleotidase SurE (255 aa).

A divalent metal cation-binding residues include D8, D9, S39, and N95.

The protein belongs to the SurE nucleotidase family. The cofactor is a divalent metal cation.

It localises to the cytoplasm. The enzyme catalyses a ribonucleoside 5'-phosphate + H2O = a ribonucleoside + phosphate. Nucleotidase that shows phosphatase activity on nucleoside 5'-monophosphates. The polypeptide is 5'-nucleotidase SurE (Herpetosiphon aurantiacus (strain ATCC 23779 / DSM 785 / 114-95)).